The chain runs to 414 residues: Probable 1-acylglycerol-3-phosphate O-acyltransferase (414 aa).

In terms of domain architecture, AB hydrolase-1 spans 117-382 (PTLVMVHGYG…GGHFVFIDNP (266 aa)). Residues 193 to 197 (GHSFG) carry the GXSXG motif. Residues 375-380 (HFVFID) carry the HXXXXD motif motif.

Belongs to the peptidase S33 family. ABHD4/ABHD5 subfamily.

It localises to the cytoplasm. It carries out the reaction a 1-acyl-sn-glycero-3-phosphate + an acyl-CoA = a 1,2-diacyl-sn-glycero-3-phosphate + CoA. Its function is as follows. Lysophosphatidic acid acyltransferase which functions in phosphatidic acid biosynthesis. May regulate neutral lipid accumulation and participate in the regulation of lipid turnover in vegetative cells. May possess additional triacylglycerol lipase and phospholipase A2 activities in vitro. The sequence is that of Probable 1-acylglycerol-3-phosphate O-acyltransferase from Oryza sativa subsp. japonica (Rice).